Here is a 312-residue protein sequence, read N- to C-terminus: uncharacterized protein (312 aa).

This sequence belongs to the asfivirus CP312R family.

The protein resides in the virion. This is an uncharacterized protein from African swine fever virus (isolate Warthog/Namibia/Wart80/1980) (ASFV).